The chain runs to 553 residues: Formate--tetrahydrofolate ligase 2 (553 aa).

63–70 provides a ligand contact to ATP; sequence TSAGEGKS.

Belongs to the formate--tetrahydrofolate ligase family.

It catalyses the reaction (6S)-5,6,7,8-tetrahydrofolate + formate + ATP = (6R)-10-formyltetrahydrofolate + ADP + phosphate. It participates in one-carbon metabolism; tetrahydrofolate interconversion. This is Formate--tetrahydrofolate ligase 2 from Lactobacillus acidophilus (strain ATCC 700396 / NCK56 / N2 / NCFM).